We begin with the raw amino-acid sequence, 172 residues long: MESRPYSWVALDPDCDHPLDDKEKDKEKHERKCHCDVCCNGNGFFGNDNAFIDQDLAQANLNKQVSDETIIIRDSCDINVTSTDVQAVTSVVTALNAAVVTATLTSIADGVIAELVAQDLLQLTANKQVNRQKLLIECSRGVNVTTVDADIATLISTATNTLVAILVITLVL.

It is found in the spore coat. The polypeptide is Spore coat protein X (cotX) (Bacillus subtilis (strain 168)).